The following is a 156-amino-acid chain: uncharacterized protein (156 aa).

This is an uncharacterized protein from Invertebrate iridescent virus 3 (IIV-3).